The sequence spans 89 residues: Small ribosomal subunit protein uS15 (89 aa).

This sequence belongs to the universal ribosomal protein uS15 family. In terms of assembly, part of the 30S ribosomal subunit. Forms a bridge to the 50S subunit in the 70S ribosome, contacting the 23S rRNA.

Functionally, one of the primary rRNA binding proteins, it binds directly to 16S rRNA where it helps nucleate assembly of the platform of the 30S subunit by binding and bridging several RNA helices of the 16S rRNA. In terms of biological role, forms an intersubunit bridge (bridge B4) with the 23S rRNA of the 50S subunit in the ribosome. The chain is Small ribosomal subunit protein uS15 from Dictyoglomus thermophilum (strain ATCC 35947 / DSM 3960 / H-6-12).